The primary structure comprises 454 residues: DNA-binding protein (454 aa).

Residues 1–41 (MSHKKVVAISESSSDEEVPVAPPTAPPKKRQRKAVEEPRGH) form a disordered region. Residue tyrosine 129 is modified to Phosphotyrosine; by host. The Zn(2+) site is built by cysteine 213 and histidine 215. A flexible loop region spans residues 226–260 (VEMDVNSENAQRALKENPEKTKIVSNRWGRNVVQF). Zn(2+)-binding residues include cysteine 268, cysteine 284, cysteine 325, cysteine 327, cysteine 378, and cysteine 394. Positions 440 to 454 (TILPQGQHDDDLVLF) are C-terminal arm, DBP binding.

This sequence belongs to the adenoviridae E2A DNA-binding protein family. Homomultimerizes on viral ssDNA bound to pTP. Forms a initiation complex with viral polymerase, pTP and hosts NFIA and POU2F1/OCT1. Interacts with host SRCAP.

It localises to the host nucleus. Its function is as follows. Plays a role in the elongation phase of viral strand displacement replication by unwinding the template in an ATP-independent fashion, employing its capacity to form multimers. Also enhances the rate of initiation. Released from template upon second strand synthesis. Assembles in complex with viral pTP, viral pol, host NFIA and host POU2F1/OCT1 on viral origin of replication. Covers the whole ssDNA genome during synthesis. The complementary strand synthesis induces its relese from DNA template. May inhibit cellular transcription mediated by the interaction between host SRCAP and CBP. This is DNA-binding protein from Canine adenovirus serotype 1 (strain CLL) (CAdV-1).